We begin with the raw amino-acid sequence, 318 residues long: Putative enoyl-CoA hydratase EchA13 (318 aa).

A disordered region spans residues Leu-90 to Arg-110.

The protein belongs to the enoyl-CoA hydratase/isomerase family.

The protein is Putative enoyl-CoA hydratase EchA13 (echA13) of Mycobacterium tuberculosis (strain ATCC 25618 / H37Rv).